A 181-amino-acid polypeptide reads, in one-letter code: Large ribosomal subunit protein uL30 (181 aa).

The protein belongs to the universal ribosomal protein uL30 family. Part of the 50S ribosomal subunit.

The protein is Large ribosomal subunit protein uL30 of Hyperthermus butylicus (strain DSM 5456 / JCM 9403 / PLM1-5).